An 88-amino-acid chain; its full sequence is Small ribosomal subunit protein uS17 (88 aa).

The protein belongs to the universal ribosomal protein uS17 family. In terms of assembly, part of the 30S ribosomal subunit.

In terms of biological role, one of the primary rRNA binding proteins, it binds specifically to the 5'-end of 16S ribosomal RNA. The sequence is that of Small ribosomal subunit protein uS17 from Pseudomonas fluorescens (strain SBW25).